We begin with the raw amino-acid sequence, 168 residues long: Thiol peroxidase (168 aa).

The 150-residue stretch at 19 to 168 (PQAGSKAQAF…YDAALNVLKA (150 aa)) folds into the Thioredoxin domain. C61 acts as the Cysteine sulfenic acid (-SOH) intermediate in catalysis. C61 and C95 form a disulfide bridge.

This sequence belongs to the peroxiredoxin family. Tpx subfamily. As to quaternary structure, homodimer.

The enzyme catalyses a hydroperoxide + [thioredoxin]-dithiol = an alcohol + [thioredoxin]-disulfide + H2O. Its function is as follows. Thiol-specific peroxidase that catalyzes the reduction of hydrogen peroxide and organic hydroperoxides to water and alcohols, respectively. Plays a role in cell protection against oxidative stress by detoxifying peroxides. The sequence is that of Thiol peroxidase from Salmonella typhimurium (strain LT2 / SGSC1412 / ATCC 700720).